The sequence spans 153 residues: Conglutin delta 2 (153 aa).

The first 22 residues, 1–22 (MAKLTILIALVAALVLVVHTSA), serve as a signal peptide directing secretion. 4 disulfides stabilise this stretch: cysteine 30/cysteine 102, cysteine 42/cysteine 90, cysteine 91/cysteine 138, and cysteine 104/cysteine 146.

This sequence belongs to the 2S seed storage albumins family. Heterodimer of a small chain and a large chain; disulfide-linked. Expressed in developing cotyledons (at protein level).

It is found in the endoplasmic reticulum. The chain is Conglutin delta 2 from Lupinus angustifolius (Narrow-leaved blue lupine).